A 194-amino-acid chain; its full sequence is Molybdenum cofactor guanylyltransferase (194 aa).

GTP-binding positions include 12-14 (LAG), K25, N53, D70, and D100. Position 100 (D100) interacts with Mg(2+).

This sequence belongs to the MobA family. In terms of assembly, monomer. Mg(2+) is required as a cofactor.

It is found in the cytoplasm. The enzyme catalyses Mo-molybdopterin + GTP + H(+) = Mo-molybdopterin guanine dinucleotide + diphosphate. Functionally, transfers a GMP moiety from GTP to Mo-molybdopterin (Mo-MPT) cofactor (Moco or molybdenum cofactor) to form Mo-molybdopterin guanine dinucleotide (Mo-MGD) cofactor. This chain is Molybdenum cofactor guanylyltransferase, found in Aliivibrio salmonicida (strain LFI1238) (Vibrio salmonicida (strain LFI1238)).